The primary structure comprises 410 residues: Shaggy-related protein kinase epsilon (410 aa).

At Ala2 the chain carries N-acetylalanine. The Protein kinase domain maps to 74–358; it reads YMAERIVGQG…AMEAIVHPFF (285 aa). ATP contacts are provided by residues 80-88 and Lys103; that span reads VGQGSFGIV. Residue Asp199 is the Proton acceptor of the active site. Tyr234 carries the phosphotyrosine modification.

It belongs to the protein kinase superfamily. CMGC Ser/Thr protein kinase family. GSK-3 subfamily. In terms of assembly, binds to KIB1. Autophosphorylated mainly on threonine and serine residues.

It catalyses the reaction L-seryl-[protein] + ATP = O-phospho-L-seryl-[protein] + ADP + H(+). It carries out the reaction L-threonyl-[protein] + ATP = O-phospho-L-threonyl-[protein] + ADP + H(+). May mediate extracellular signals to regulate transcription in differentiating cells. This Arabidopsis thaliana (Mouse-ear cress) protein is Shaggy-related protein kinase epsilon (ASK5).